The chain runs to 404 residues: Lissencephaly-1 homolog (404 aa).

In terms of domain architecture, LisH spans 7 to 39 (QKEEINRAIAEYMQNNGYSESFSVFLKESSLSE). The stretch at 54-81 (TTVLRLQRKVNDLESKLQESQREINHGA) forms a coiled coil. A compositionally biased stretch (basic and acidic residues) spans 69-89 (KLQESQREINHGAPTRDKRQA). Residues 69-90 (KLQESQREINHGAPTRDKRQAA) form a disordered region. WD repeat units lie at residues 104-145 (GHRL…RTLK), 146-185 (GHTD…DCLK), 189-228 (GHEH…CVYT), 231-270 (GHND…AKLV), 273-327 (DHEH…VLFT), 330-369 (AHEN…CMKA), and 372-404 (AHEH…WECR).

It belongs to the WD repeat LIS1/nudF family. As to quaternary structure, component of a dynein-regulating complex composed of at least lis-1 and nud-2. Interacts with nud-2; the interaction is direct. Expressed in all classes of neurons in the ventral cord. Expressed in the multinucleate spermathecal valves and adult seam cells.

It localises to the cytoplasm. It is found in the cytoskeleton. Its subcellular location is the microtubule organizing center. The protein resides in the centrosome. The protein localises to the chromosome. It localises to the centromere. It is found in the kinetochore. Its subcellular location is the nucleus envelope. In terms of biological role, positively regulates the activity of the minus-end directed microtubule motor protein dynein. May enhance dynein-mediated microtubule sliding by targeting dynein to the microtubule plus end. Required for several dynein- and microtubule-dependent processes such as nuclear migration during cell division. Part of a complex with nud-2, which is recruited to the nuclear envelope by unc-83, where, in turn, it recruits dynein to the nuclear surface and regulates nuclear migration in hypodermal precursor cells. Plays a role in GABAergic synaptic vesicle localization in the ventral nerve cord. Required for neuronal cell differentiation. The chain is Lissencephaly-1 homolog from Caenorhabditis elegans.